Here is a 558-residue protein sequence, read N- to C-terminus: Protein NRT1/ PTR FAMILY 2.7 (558 aa).

Transmembrane regions (helical) follow at residues 31-51 (FMIATLLGLTIAAWGWLLNLI), 63-83 (IAAAQIANIVSGCICMVPAVA), 90-110 (FFGTIPVISVSAFISLMGVAL), 140-162 (LGVLYTAITLASIGTGGTRFTLA), 178-198 (FFNWFFFTTYLAGAISATAIV), 204-224 (ISWTLGFGLSVAANFFSFLVF), 319-339 (IIPLALATIFLSTPIAMQLSL), 357-377 (IPAGSLQVITLLSTCLFIIVN), 399-419 (VGIGHAFNILSMAVTAIVEAK), 440-460 (VLWLFPPLVIVGIGEAFHFPG), 479-499 (SITSVVIGICFYTSTALIDLI), and 518-538 (VYWILVIGGVLNLGYFLVCSW).

This sequence belongs to the major facilitator superfamily. Proton-dependent oligopeptide transporter (POT/PTR) (TC 2.A.17) family. Expressed in shoots and in the cortex of mature roots. Not expressed in root tip meristematic cells.

It is found in the cell membrane. Functionally, transporter involved in a passive nitrate efflux. Not competent for chloride transport. This Arabidopsis thaliana (Mouse-ear cress) protein is Protein NRT1/ PTR FAMILY 2.7 (NPF2.7).